A 236-amino-acid polypeptide reads, in one-letter code: Cutinase (236 aa).

The signal sequence occupies residues M1–A20. A disulfide bond links C66 and C143. S154 serves as the catalytic Nucleophile. C202 and C209 form a disulfide bridge. D206 is an active-site residue. The Proton donor/acceptor role is filled by H218.

This sequence belongs to the cutinase family. Post-translationally, the 2 disulfide bonds play a critical role in holding the catalytic residues in juxta-position; reduction of the disulfide bridges results in the complete inactivation of the enzyme.

The protein resides in the secreted. The enzyme catalyses cutin + H2O = cutin monomers.. Catalyzes the hydrolysis of complex carboxylic polyesters found in the cell wall of plants. Degrades cutin, a macromolecule that forms the structure of the plant cuticle. Allows pathogenic fungi to penetrate through the cuticular barrier into the host plant during the initial stage of fungal infection. This chain is Cutinase (CUT1), found in Blumeria hordei (Barley powdery mildew).